The primary structure comprises 419 residues: tRNA(Ile)-lysidine synthase (419 aa).

Residue 31 to 36 participates in ATP binding; the sequence is SGGGDS.

This sequence belongs to the tRNA(Ile)-lysidine synthase family.

It localises to the cytoplasm. The catalysed reaction is cytidine(34) in tRNA(Ile2) + L-lysine + ATP = lysidine(34) in tRNA(Ile2) + AMP + diphosphate + H(+). Its function is as follows. Ligates lysine onto the cytidine present at position 34 of the AUA codon-specific tRNA(Ile) that contains the anticodon CAU, in an ATP-dependent manner. Cytidine is converted to lysidine, thus changing the amino acid specificity of the tRNA from methionine to isoleucine. The polypeptide is tRNA(Ile)-lysidine synthase (Ruegeria pomeroyi (strain ATCC 700808 / DSM 15171 / DSS-3) (Silicibacter pomeroyi)).